The primary structure comprises 292 residues: Elongation factor Ts (292 aa).

Positions 80-83 are involved in Mg(2+) ion dislocation from EF-Tu; the sequence is TDFV.

It belongs to the EF-Ts family.

The protein resides in the cytoplasm. In terms of biological role, associates with the EF-Tu.GDP complex and induces the exchange of GDP to GTP. It remains bound to the aminoacyl-tRNA.EF-Tu.GTP complex up to the GTP hydrolysis stage on the ribosome. This is Elongation factor Ts from Ralstonia nicotianae (strain ATCC BAA-1114 / GMI1000) (Ralstonia solanacearum).